The following is a 238-amino-acid chain: Serine protease SplA (238 aa).

An N-terminal signal peptide occupies residues 1 to 38 (MNKNVMVKGLTALTILTILTSLGFAENISNQPHSIAKA). Catalysis depends on charge relay system residues His77, Asp116, and Ser192.

The protein belongs to the peptidase S1B family.

It is found in the secreted. The polypeptide is Serine protease SplA (splA) (Staphylococcus aureus (strain COL)).